Here is a 1412-residue protein sequence, read N- to C-terminus: MKGLLDLFKQFTPDEHFDAIKIGLASPEKIRSWSFGEVKKPETINYRTFKPERDGLFCAKIFGPIKDYECLCGKYKRLKHRGVICEKCGVEVTQTKVRRDRMGHIDLAAPCAHIWFLKSLPSRLGLVLDMTLRDIERVLYFEAYVVVDPGMTELKKFSIMTEDDYDAKKQQHGDEFVALMGAEGIQKLLAEIDLDVEIERLRGDMTGSELKVKKNSRRLKVMEAFKKSGIKPQWMVMNVLPVLPPDLRPLVPLDGGRFATSDLNDLYRRVINRNNRLARLLELKAPEIIVRNEKRMLQEAVDSLLDNGRRGKAMTGANKRALKSLADMIKGKSGRFRQNLLGKRVDYSGRSVIVVGPTLKLHQCGLPKLMALELFKPFIFSRLEAMGIATTIKAAKKEVESGTPVVWDILEEVIKEHPVMLNRAPTLHRLGIQAFEPVLIEGKAIQLHPLVCAAFNADFDGDQMAVHVPLSIEAQMEARTLMLASNNVLFPANGEPSIVPSQDVVLGLYYATRDRINAKGEGLIFSDVVEVQRALDNGQVEITAKIAVRLTEWTKDKESGEFVPESKLVDTTVGRALLSEILPKGLPFANINKALKKKEISRLINTSFRKCGLKETVVLADKLLQSGFRLATRAGISISIDDMLVPKQKHDLIERAEKEVKEIEQQYVSGLVTAGERYNKVVDIWGKTGDEVGKVMMAQLSKQKVEDRHGKLVDQESFNSIYMMADSGARGSAAQIRQLAGMRGLMAKPDGSIIETPITANFREGLNVLQYFISTHGARKGLADTALKTANSGYLTRRLVDVTQDLVVTEDDCGTDAGIAMRALVEGGEVIESLRDRILGRVTAIEVLHPETQQVVVPAGLMLDEDTLDIVEAAAVDEVKVRTPLTCHTRFGLCAKCYGRDLGRGGLVNAGEAVGVIAAQSIGEPGTQLTMRTFHIGGAASRAAVASSVEAKSDGHIGFNATMRYVTNGKGELVVISRSGEIIISDQHGRERERHKVPYGATLNIKADQQVKAGTVLANWDPLTRPIITEFAGKAKFENVEEGVTVAKQVDEVTGLSTLVVIDPKRRGAAKVVRPQVKLLDAAGNEVKIPGTDHSVTIGFPIGSLVQIRDGQDLAPGEVLARIPVEGQKTRDITGGLPRVAELFEARTPKDKGTLAEMTGTVSFGKETKGKVRLQITDPDGKVYEELVPKEKNILVHEGQVVNKGESIVDGPADPQDILRLLGIEELARYIVDEVQDVYRLQGVKINDKHIEVIVRQMLRRVQIVNPGDTHYILGEQVERASMLDTNDKMRAEGKMIATHADVLLGITKASLSTDSFISAASFQETTRVLTEAAIMGKRDELRGLKENVIVGRLIPAGTGLAFHRARKAKEEMDDAERRSIALQEAEEQALLTPATTAEAVVGEEPAPPPAQ.

Zn(2+) contacts are provided by C70, C72, C85, and C88. Mg(2+) is bound by residues D458, D460, and D462. Zn(2+) is bound by residues C813, C887, C894, and C897. A disordered region spans residues 1388 to 1412 (EQALLTPATTAEAVVGEEPAPPPAQ). A compositionally biased stretch (low complexity) spans 1393-1405 (TPATTAEAVVGEE).

This sequence belongs to the RNA polymerase beta' chain family. In terms of assembly, the RNAP catalytic core consists of 2 alpha, 1 beta, 1 beta' and 1 omega subunit. When a sigma factor is associated with the core the holoenzyme is formed, which can initiate transcription. The cofactor is Mg(2+). It depends on Zn(2+) as a cofactor.

It carries out the reaction RNA(n) + a ribonucleoside 5'-triphosphate = RNA(n+1) + diphosphate. Its function is as follows. DNA-dependent RNA polymerase catalyzes the transcription of DNA into RNA using the four ribonucleoside triphosphates as substrates. This chain is DNA-directed RNA polymerase subunit beta', found in Methylibium petroleiphilum (strain ATCC BAA-1232 / LMG 22953 / PM1).